We begin with the raw amino-acid sequence, 963 residues long: Ras-interacting protein 1 (963 aa).

A compositionally biased stretch (basic and acidic residues) spans 1-10; the sequence is MLSGERKEGG. 2 disordered regions span residues 1–22 and 35–118; these read MLSGERKEGGSPRFGKLHLPVG and LGRR…AQRW. Positions 41-57 are enriched in low complexity; the sequence is SAASVKSSSSDTGSRSS. Residue Arg-94 is modified to Omega-N-methylarginine. Gly residues predominate over residues 96–113; that stretch reads SGTGTTGSSGAGGPGTPG. The 116-residue stretch at 144 to 259 folds into the Ras-associating domain; that stretch reads PPGVLKIFGA…RRFELRGREE (116 aa). Phosphoserine occurs at positions 188, 280, and 292. Residues 267-356 are disordered; it reads AFGAADSEGT…LSMAPGAADA (90 aa). Residues 290–301 show a composition bias toward low complexity; that stretch reads AASGGAALASPG. Over residues 302 to 313 the composition is skewed to gly residues; that stretch reads PGTGSGAPAGSG. Residues 320 to 333 are compositionally biased toward low complexity; it reads NLSLRRSVSELSLQ. A phosphoserine mark is found at Ser-326, Ser-328, Ser-331, and Ser-419. In terms of domain architecture, Dilute spans 600-897; that stretch reads GRLARLIKEA…PPAEREAVDT (298 aa).

Interacts with Ras family members that have been activated by GTP binding. Interacts with HRAS, RAP1A, RAP2, RRAS, RAF1 and RRAS2. Interacts with MYH9 and ARHGAP29. As to expression, highly expressed in heart. Detected at lower levels in placenta and pancreas.

Its subcellular location is the cytoplasm. It is found in the perinuclear region. The protein resides in the golgi apparatus. The protein localises to the golgi stack. In terms of biological role, required for the proper formation of vascular structures that develop via both vasculogenesis and angiogenesis. Acts as a critical and vascular-specific regulator of GTPase signaling, cell architecture, and adhesion, which is essential for endothelial cell morphogenesis and blood vessel tubulogenesis. Regulates the activity of Rho GTPases in part by recruiting ARHGAP29 and suppressing RhoA signaling and dampening ROCK and MYH9 activities in endothelial cells. May act as effector for Golgi-bound HRAS and other Ras-like proteins. May promote HRAS-mediated transformation. Negative regulator of amino acid starvation-induced autophagy. The chain is Ras-interacting protein 1 (RASIP1) from Homo sapiens (Human).